The sequence spans 227 residues: C4-dicarboxylate TRAP transporter small permease protein DctQ (227 aa).

The Cytoplasmic segment spans residues 1–7; it reads MLRILDR. A helical membrane pass occupies residues 8–28; it reads AEEVLIAALIATATVLIFVSV. Topologically, residues 29–67 are periplasmic; the sequence is THRFTLGFVADFVGFFRGHGMTGAAAAAKSLYTTLRGIN. The chain crosses the membrane as a helical span at residues 68-88; the sequence is LVWAQELCIILFVWMAKFGAA. The Cytoplasmic portion of the chain corresponds to 89–112; that stretch reads YGVRTGIHVGIDVLINRLDAPKRR. Residues 113 to 133 form a helical membrane-spanning segment; sequence FFILLGLGAGALFTGIIATLG. Residues 134–149 lie on the Periplasmic side of the membrane; the sequence is ANFVLHMYHASSTSPD. A helical membrane pass occupies residues 150 to 170; it reads LELPMWLVYLAIPMGSSLMCF. Residues 171–227 are Cytoplasmic-facing; the sequence is RFLQVAFGFARTGELPHHDHGHVDGVDTENEGIDAEGDVLLHSPLTPRDLVEKPKDN.

This sequence belongs to the TRAP transporter small permease family. In terms of assembly, the complex comprises the extracytoplasmic solute receptor protein DctP, and the two transmembrane proteins DctQ and DctM.

It is found in the cell inner membrane. In terms of biological role, part of the tripartite ATP-independent periplasmic (TRAP) transport system DctPQM involved in C4-dicarboxylates uptake. This chain is C4-dicarboxylate TRAP transporter small permease protein DctQ, found in Rhodobacter capsulatus (Rhodopseudomonas capsulata).